The chain runs to 477 residues: Tripartite motif-containing protein 72 (477 aa).

Cysteine 14, cysteine 17, cysteine 29, histidine 31, cysteine 34, cysteine 37, cysteine 53, cysteine 56, cysteine 86, histidine 89, cysteine 97, aspartate 100, cysteine 105, cysteine 108, histidine 114, and histidine 117 together coordinate Zn(2+). An RING-type zinc finger spans residues 14 to 57 (CPLCLQLFDAPVTAECGHSFCRACLIRVAGEPADDGTVACPCCQ). The B box-type zinc finger occupies 81–122 (VPQGHCEEHLDPLSIYCEQDRTLVCGVCASLGSHRGHRLLPA). Residues 135-232 (QQKAQLQEAC…EKVLEEVADK (98 aa)) are a coiled coil. Cysteine 144 carries the S-nitrosocysteine modification. Serine 255 is modified (phosphoserine). The 205-residue stretch at 271–475 (DFKFQVWKKM…PLLLVGPDSE (205 aa)) folds into the B30.2/SPRY domain.

Belongs to the TRIM/RBCC family. Homodimer. Homooligomer; disulfide-linked. Oligomerizes on the phospholipid membrane. Interacts with DYSF and CAV3. Post-translationally, disulfide bond formation at Cys-242 occurs in case of membrane damage that cause the entry of the oxidized milieu of the extracellular space, resulting in homooligomerization. In terms of processing, S-nitrosylation at Cys-144 stabilizes TRIM72 and protects against oxidation-induced protein degradation and cell death.

It is found in the cell membrane. Its subcellular location is the sarcolemma. It localises to the cytoplasmic vesicle membrane. It carries out the reaction S-ubiquitinyl-[E2 ubiquitin-conjugating enzyme]-L-cysteine + [acceptor protein]-L-lysine = [E2 ubiquitin-conjugating enzyme]-L-cysteine + N(6)-ubiquitinyl-[acceptor protein]-L-lysine.. It functions in the pathway protein modification; protein ubiquitination. Its activity is regulated as follows. Specifically binds phosphatidylserine. The binding to phospholipids enhances ubiquitination activity. Functionally, muscle-specific E3 ubiquitin-protein ligase that plays a central role in cell membrane repair by nucleating the assembly of the repair machinery at injury sites. Its ubiquitination activity is mediated by E2 ubiquitin-conjugating enzymes UBE2D1, UBE2D2 and UBE2D3. Acts as a sensor of oxidation: upon membrane damage, entry of extracellular oxidative environment results in disulfide bond formation and homooligomerization at the injury site. This oligomerization acts as a nucleation site for recruitment of TRIM72-containing vesicles to the injury site, leading to membrane patch formation. Probably acts upstream of the Ca(2+)-dependent membrane resealing process. Required for transport of DYSF to sites of cell injury during repair patch formation. Regulates membrane budding and exocytosis. May be involved in the regulation of the mobility of KCNB1-containing endocytic vesicles. This is Tripartite motif-containing protein 72 from Rattus norvegicus (Rat).